A 354-amino-acid chain; its full sequence is Methylthioribose-1-phosphate isomerase (354 aa).

Substrate-binding positions include 58-60 (RGA), Arg101, and Gln204. The active-site Proton donor is Asp245. A substrate-binding site is contributed by 255–256 (NK).

This sequence belongs to the eIF-2B alpha/beta/delta subunits family. MtnA subfamily.

The enzyme catalyses 5-(methylsulfanyl)-alpha-D-ribose 1-phosphate = 5-(methylsulfanyl)-D-ribulose 1-phosphate. Its pathway is amino-acid biosynthesis; L-methionine biosynthesis via salvage pathway; L-methionine from S-methyl-5-thio-alpha-D-ribose 1-phosphate: step 1/6. Its function is as follows. Catalyzes the interconversion of methylthioribose-1-phosphate (MTR-1-P) into methylthioribulose-1-phosphate (MTRu-1-P). The chain is Methylthioribose-1-phosphate isomerase from Xylella fastidiosa (strain M23).